Reading from the N-terminus, the 213-residue chain is Outer-membrane lipoprotein carrier protein (213 aa).

The first 23 residues, 1 to 23, serve as a signal peptide directing secretion; it reads MKKLLKQSLLGFALVSMTGAAFA.

This sequence belongs to the LolA family. In terms of assembly, monomer.

The protein localises to the periplasm. Its function is as follows. Participates in the translocation of lipoproteins from the inner membrane to the outer membrane. Only forms a complex with a lipoprotein if the residue after the N-terminal Cys is not an aspartate (The Asp acts as a targeting signal to indicate that the lipoprotein should stay in the inner membrane). The polypeptide is Outer-membrane lipoprotein carrier protein (Actinobacillus pleuropneumoniae serotype 7 (strain AP76)).